Here is a 418-residue protein sequence, read N- to C-terminus: Homoaconitase large subunit (418 aa).

The [4Fe-4S] cluster site is built by C292, C352, and C355.

It belongs to the aconitase/IPM isomerase family. As to quaternary structure, heterodimer of HacA and HacB. [4Fe-4S] cluster serves as cofactor.

It carries out the reaction (2R,3S)-homoisocitrate = cis-homoaconitate + H2O. The protein operates within amino-acid biosynthesis; L-lysine biosynthesis via AAA pathway; L-alpha-aminoadipate from 2-oxoglutarate: step 3/5. With respect to regulation, is not inhibited by lysine. Catalyzes the reversible hydration of cis-homoaconitate ((Z)-but-1-ene-1,2,4-tricarboxylate) to homoisocitrate ((1R,2S)-1-hydroxybutane-1,2,4-tricarboxylate). Can catalyze neither the dehydration of (R)-homocitrate ((2R)-2-hydroxybutane-1,2,4-tricarboxylate) into cis-homoaconitate in vitro, nor the reverse reaction. Is not active toward (S)-homocitrate, cis-aconitate or citrate as substrate. In Thermus thermophilus (strain ATCC BAA-163 / DSM 7039 / HB27), this protein is Homoaconitase large subunit (hacA).